Reading from the N-terminus, the 1832-residue chain is Zinc finger protein 646 (1832 aa).

8 C2H2-type zinc fingers span residues 8–31, 48–70, 75–97, 239–261, 266–288, 294–316, 374–396, and 401–424; these read LSCS…ELLH, YRCQ…RRTH, FPCT…MRTH, YKCS…RQSH, YPCA…SRLH, YHCP…QQSH, FRCG…RKSH, and YPCS…RAHH. Residues 26–47 are disordered; sequence HRELLHPSPNQDSEEADSIPRP. The segment covering 94 to 108 has biased composition (basic residues); it reads MRTHAPEGRRRHRPP. The interval 94–200 is disordered; that stretch reads MRTHAPEGRR…TNSARAPPLP (107 aa). Positions 313–329 are enriched in basic and acidic residues; the sequence is QQSHEGERQEPRWEEKG. Positions 313–346 are disordered; it reads QQSHEGERQEPRWEEKGMPTTNGHTDESSQDQLP. A Glycyl lysine isopeptide (Lys-Gly) (interchain with G-Cter in SUMO2) cross-link involves residue Lys-451. 2 C2H2-type zinc fingers span residues 465–487 and 492–514; these read YKCS…RHSH and YQCS…VRVH. Residues Lys-534 and Lys-557 each participate in a glycyl lysine isopeptide (Lys-Gly) (interchain with G-Cter in SUMO2) cross-link. The segment at 575-597 adopts a C2H2-type 11 zinc-finger fold; the sequence is HICSICGLLFEDAESLERHGLTH. Ser-612 carries the post-translational modification Phosphoserine. 2 consecutive C2H2-type zinc fingers follow at residues 617–639 and 644–666; these read FACR…RQTH and FSCG…LRRH. Residues 660–810 are disordered; sequence KNHLRRHSRR…QPNSSSHSAN (151 aa). Basic residues predominate over residues 661-678; it reads NHLRRHSRRRSRRHRKRA. Residue Lys-688 forms a Glycyl lysine isopeptide (Lys-Gly) (interchain with G-Cter in SUMO2) linkage. Positions 735 to 767 are enriched in basic and acidic residues; that stretch reads EGDKCGLERDETHFQGDKESGGTGEGLERKDAS. Residues 798–810 show a composition bias toward polar residues; that stretch reads ATGQPNSSSHSAN. C2H2-type zinc fingers lie at residues 821–843, 848–870, and 881–904; these read HTCS…RPCH, YQCS…FQNH, and FLCC…RQAH. A disordered region spans residues 901-931; it reads RQAHSSSGMTEGSEEEGEEEGVAEAAPARSP. Residues 912–922 show a composition bias toward acidic residues; sequence GSEEEGEEEGV. A C2H2-type 17; degenerate zinc finger spans residues 958 to 980; that stretch reads HICGCCGQTYDDLGSLERHHQSQ. C2H2-type zinc fingers lie at residues 1052 to 1074 and 1079 to 1101; these read FRCN…RKIH and FLCP…LRNH. The disordered stretch occupies residues 1103 to 1148; it reads RCKGSEPQVGPIPEAAGSSELQVGPIPEGGSNKPQHMAEEGPGQAE. Glycyl lysine isopeptide (Lys-Gly) (interchain with G-Cter in SUMO2) cross-links involve residues Lys-1157, Lys-1168, and Lys-1178. C2H2-type zinc fingers lie at residues 1203–1225, 1230–1252, 1258–1280, 1299–1321, 1326–1348, and 1364–1386; these read FSCE…RQSH, FGCQ…RRIH, FRCS…QRVH, FRCG…RRSH, YSCP…QRLH, and VRCA…LREH. The interval 1274 to 1294 is disordered; it reads ASHQRVHMERRGGGGTRKATR. 2 disordered regions span residues 1377 to 1481 and 1509 to 1529; these read GSLE…WVPQ and TLSH…QPGS. The span at 1378–1393 shows a compositional bias: basic and acidic residues; that stretch reads SLERHLREHEETEREP. Polar residues predominate over residues 1406–1417; that stretch reads SEANLTGSQGLE. The segment covering 1427-1438 has biased composition (basic and acidic residues); it reads PHLEDGVPRPGE. Positions 1460-1475 are enriched in gly residues; it reads GKAGGWPVGGGLGNHS. 6 consecutive C2H2-type zinc fingers follow at residues 1557–1579, 1585–1607, 1677–1699, 1704–1726, 1732–1754, and 1761–1783; these read HYCL…SHNH, FACP…LQAH, FRCT…QKAH, YPCS…SRTH, HCCS…GRVH, and FTCP…QQQH. The tract at residues 1606-1672 is disordered; it reads AHARGHSQVP…QAVTSMAAED (67 aa). Residues 1781–1832 are disordered; that stretch reads QQHQEEWTVAGSGAPVAPVTGRGDLPLPPPPTPTTPLLDPSPQWPADLSFSL.

It belongs to the krueppel C2H2-type zinc-finger protein family.

It is found in the nucleus. Functionally, may be involved in transcriptional regulation. The chain is Zinc finger protein 646 from Homo sapiens (Human).